A 4582-amino-acid polypeptide reads, in one-letter code: Probable transcription-associated protein 1 (4582 aa).

The segment covering 1–11 (MSTNPPQPPPS) has biased composition (pro residues). Disordered stretches follow at residues 1-52 (MSTN…SSGN), 219-276 (TTTA…TTTT), 556-581 (KEKEKELKDPQSLKDKLDGLSSANTT), 794-821 (VGGSGGSNSSGGGGGGGSNSSNNSTNSN), 1152-1195 (ENEN…NNNI), 1483-1570 (QSTT…STIN), 2341-2410 (SIKT…NIDD), 2537-2567 (TTTTPVSSTTTTEQSSDSSSLPPPPPVQVTK), 2637-2662 (SDGGTGSLANKPLSSSGSTSQTGGAS), and 2741-2789 (SPST…TTTE). The span at 25-37 (PMSTTNPSQPTIT) shows a compositional bias: polar residues. Composition is skewed to low complexity over residues 38–50 (SSSAASSSSSSSS), 219–250 (TTTAISPTTTTTTTPATATTPATTTATGNTIT), and 258–276 (PSTTATAISPTSSTTTTTT). Residues 556 to 573 (KEKEKELKDPQSLKDKLD) show a composition bias toward basic and acidic residues. Residues 794–811 (VGGSGGSNSSGGGGGGGS) show a composition bias toward gly residues. 5 stretches are compositionally biased toward low complexity: residues 812 to 821 (NSSNNSTNSN), 1158 to 1194 (DNNNNNNNNNNNNNNNNNNNNNNNNNNNNNNNNNNNN), 1484 to 1504 (STTTASTTETAATTTTTETAT), 1515 to 1568 (TEPT…SSST), and 2341 to 2367 (SIKTSSSSLPTTTTTTTSSNKPTDSSS). Positions 2378 to 2398 (SITTPSQGGVATPNVSDSTPT) are enriched in polar residues. Composition is skewed to low complexity over residues 2537–2556 (TTTTPVSSTTTTEQSSDSSS) and 2650–2662 (SSSGSTSQTGGAS). A coiled-coil region spans residues 2944-2991 (NDINQQQQQQQQQQQQQQQQQQQQQQQQQQQQQQQQQQQQQQHHQQEQ). Positions 3185-3815 (VISFLGENYN…YYHFRKLVLE (631 aa)) constitute an FAT domain. Composition is skewed to low complexity over residues 3491-3509 (TNTTTTITNPDGTTTTTTT) and 3824-3916 (TTSP…ANTT). Disordered stretches follow at residues 3491-3517 (TNTTTTITNPDGTTTTTTTPLPPPQQP) and 3821-3928 (SKFT…FSPL). Residues 4171-4541 (VCPRITLYGG…MLENRIDSLT (371 aa)) form the PI3K/PI4K catalytic domain. Positions 4177–4183 (LYGGNGK) are G-loop. The interval 4312-4337 (NITEDNNISSSSSSSSSSGSNSGENS) is disordered. Positions 4320–4337 (SSSSSSSSSSGSNSGENS) are enriched in low complexity. The interval 4400 to 4408 (DIGDIDPSK) is catalytic loop. The tract at residues 4429–4451 (NRKLGFDLLQDNPYNQQQLLRLS) is activation loop. The region spanning 4538–4582 (DSLTPSSQPDKTCFISPIVKKVNQLIQNSLSSNISQLDQLSCPWL) is the FATC domain.

The protein belongs to the PI3/PI4-kinase family. TRA1 subfamily.

The protein is Probable transcription-associated protein 1 (tra1) of Dictyostelium discoideum (Social amoeba).